Reading from the N-terminus, the 437-residue chain is Serine hydroxymethyltransferase (437 aa).

(6S)-5,6,7,8-tetrahydrofolate contacts are provided by residues L130 and 134–136 (GHL). K239 bears the N6-(pyridoxal phosphate)lysine mark. 363–365 (TPF) serves as a coordination point for (6S)-5,6,7,8-tetrahydrofolate.

It belongs to the SHMT family. As to quaternary structure, homodimer. The cofactor is pyridoxal 5'-phosphate.

It is found in the cytoplasm. The enzyme catalyses (6R)-5,10-methylene-5,6,7,8-tetrahydrofolate + glycine + H2O = (6S)-5,6,7,8-tetrahydrofolate + L-serine. It functions in the pathway one-carbon metabolism; tetrahydrofolate interconversion. Its pathway is amino-acid biosynthesis; glycine biosynthesis; glycine from L-serine: step 1/1. Its function is as follows. Catalyzes the reversible interconversion of serine and glycine with tetrahydrofolate (THF) serving as the one-carbon carrier. This reaction serves as the major source of one-carbon groups required for the biosynthesis of purines, thymidylate, methionine, and other important biomolecules. Also exhibits THF-independent aldolase activity toward beta-hydroxyamino acids, producing glycine and aldehydes, via a retro-aldol mechanism. This Bartonella henselae (strain ATCC 49882 / DSM 28221 / CCUG 30454 / Houston 1) (Rochalimaea henselae) protein is Serine hydroxymethyltransferase.